The primary structure comprises 265 residues: Undecaprenyl-diphosphatase (265 aa).

The next 8 helical transmembrane spans lie at 14–34 (GLGE…PWLF), 40–60 (SLVF…VYFW), 79–99 (GKLF…GYLF), 112–132 (LLIA…DSIA), 141–161 (MNVF…FPGI), 182–202 (AKFS…VSLL), 217–237 (IGFF…LGIV), and 242–262 (FKIF…FYLL).

The protein belongs to the UppP family.

It localises to the cell membrane. It carries out the reaction di-trans,octa-cis-undecaprenyl diphosphate + H2O = di-trans,octa-cis-undecaprenyl phosphate + phosphate + H(+). In terms of biological role, catalyzes the dephosphorylation of undecaprenyl diphosphate (UPP). Confers resistance to bacitracin. This is Undecaprenyl-diphosphatase from Caldicellulosiruptor bescii (strain ATCC BAA-1888 / DSM 6725 / KCTC 15123 / Z-1320) (Anaerocellum thermophilum).